Consider the following 309-residue polypeptide: Malate dehydrogenase (309 aa).

Residues 9-14 (GAGFVG) and Asp33 each bind NAD(+). 2 residues coordinate substrate: Arg82 and Arg88. NAD(+) is bound by residues Asn95 and 118–120 (VNN). Substrate is bound by residues Asn120 and Arg151. His175 serves as the catalytic Proton acceptor.

Belongs to the LDH/MDH superfamily. MDH type 3 family.

It catalyses the reaction (S)-malate + NAD(+) = oxaloacetate + NADH + H(+). Its function is as follows. Catalyzes the reversible oxidation of malate to oxaloacetate. The polypeptide is Malate dehydrogenase (Roseiflexus sp. (strain RS-1)).